The chain runs to 291 residues: tRNA-cytidine(32) 2-sulfurtransferase (291 aa).

The PP-loop motif signature appears at 36–41; that stretch reads SGGKDS. 3 residues coordinate [4Fe-4S] cluster: C111, C114, and C202. The segment at 259 to 291 is disordered; the sequence is DPWLDAEDEEAEDCGEPSAGDGVVSLGGARGGR. The span at 262 to 273 shows a compositional bias: acidic residues; it reads LDAEDEEAEDCG.

Belongs to the TtcA family. Homodimer. It depends on Mg(2+) as a cofactor. [4Fe-4S] cluster is required as a cofactor.

It localises to the cytoplasm. The catalysed reaction is cytidine(32) in tRNA + S-sulfanyl-L-cysteinyl-[cysteine desulfurase] + AH2 + ATP = 2-thiocytidine(32) in tRNA + L-cysteinyl-[cysteine desulfurase] + A + AMP + diphosphate + H(+). It functions in the pathway tRNA modification. Its function is as follows. Catalyzes the ATP-dependent 2-thiolation of cytidine in position 32 of tRNA, to form 2-thiocytidine (s(2)C32). The sulfur atoms are provided by the cysteine/cysteine desulfurase (IscS) system. The sequence is that of tRNA-cytidine(32) 2-sulfurtransferase from Anaeromyxobacter sp. (strain K).